Consider the following 435-residue polypeptide: ATP-dependent protease ATPase subunit HslU (435 aa).

Residues I18, 60–65, D248, E313, and R385 each bind ATP; that span reads GVGKTE.

It belongs to the ClpX chaperone family. HslU subfamily. In terms of assembly, a double ring-shaped homohexamer of HslV is capped on each side by a ring-shaped HslU homohexamer. The assembly of the HslU/HslV complex is dependent on binding of ATP.

The protein resides in the cytoplasm. Its function is as follows. ATPase subunit of a proteasome-like degradation complex; this subunit has chaperone activity. The binding of ATP and its subsequent hydrolysis by HslU are essential for unfolding of protein substrates subsequently hydrolyzed by HslV. HslU recognizes the N-terminal part of its protein substrates and unfolds these before they are guided to HslV for hydrolysis. The chain is ATP-dependent protease ATPase subunit HslU from Rhizobium etli (strain ATCC 51251 / DSM 11541 / JCM 21823 / NBRC 15573 / CFN 42).